Reading from the N-terminus, the 3902-residue chain is Hybrid PKS-NRPS synthetase pynA (3902 aa).

A disordered region spans residues 1–25 (MDTPLSSSEISPRFSNTVPSSVSSM). A Ketosynthase family 3 (KS3) domain is found at 29-441 (ADPSVIVGLA…GTNAHVILDA (413 aa)). Catalysis depends on for beta-ketoacyl synthase activity residues cysteine 201, histidine 324, and histidine 362. A malonyl-CoA:ACP transacylase (MAT) domain region spans residues 555-868 (VFTGQGAQWF…PYLASLTRGV (314 aa)). Catalysis depends on serine 647, which acts as the For malonyltransferase activity. Residues 945-1080 (HSILGARMPG…GLVSVETNAL (136 aa)) are N-terminal hotdog fold. Residues 945–1256 (HSILGARMPG…LEVTALGSDK (312 aa)) are dehydratase (DH) domain. The region spanning 945-1258 (HSILGARMPG…VTALGSDKTD (314 aa)) is the PKS/mFAS DH domain. The active-site Proton acceptor; for dehydratase activity is histidine 977. Residues 1100–1258 (QESIPAETLY…VTALGSDKTD (159 aa)) form a C-terminal hotdog fold region. Residue aspartate 1164 is the Proton donor; for dehydratase activity of the active site. Residues 1629-1945 (GLLETLVFED…MGKHTGKVVL (317 aa)) are enoyl reductase (ER) domain. Residues 1971 to 2143 (TYLLVGGLGG…AGTTMNCGMI (173 aa)) form a ketoreductase (KR) domain region. Positions 2251–2328 (ERTTLVLSAF…ALVTKASGLI (78 aa)) constitute a Carrier 1 domain. Serine 2288 is modified (O-(pantetheine 4'-phosphoryl)serine). A compositionally biased stretch (basic and acidic residues) spans 2337-2350 (KAENVDNEGAKGNE). The interval 2337 to 2364 (KAENVDNEGAKGNEDQEVETQQGQLNQP) is disordered. Residues 2374–2816 (VPMSSFQQRL…AEVNLCGALE (443 aa)) form a condensation (C) domain 7 region. Positions 2836 to 3248 (SVGVCQRIME…NGLLTFKGRI (413 aa)) are adenylation (A) domain 8. The Carrier 2 domain maps to 3391 to 3467 (GDDAEILQGV…AIAGMIQKQL (77 aa)). At serine 3427 the chain carries O-(pantetheine 4'-phosphoryl)serine. The tract at residues 3515-3774 (LTGIDTFIGL…VDFLPVDALT (260 aa)) is thioesterase (TE) domain.

It in the C-terminal section; belongs to the NRP synthetase family.

Its pathway is secondary metabolite biosynthesis. Its function is as follows. Hybrid PKS-NRPS synthetase; part of the gene cluster that mediates the biosynthesis of pyranonigrins, a family of antioxidative compounds. The first step of pyranonigrins biosynthesis is performed by the hybrid PKS-NRPS synthetase that condenses 6 malonyl-CoA units to an acetyl starter unit, to form a 1,3,5-trioxotetradecane-6,8-dienyl-ACP. The enoyl reductase (ER) domain of pynA is likely to be functional during the first two rounds of polyketide chain extension, to generate the saturated C-C bonds of the alkyl side chain. PynA subsequently forms the amide bond between the acyl chain and L-serine. Although pynA has a terminal reductase domain, it appears to require the thioesterase pynI for the release of the straight-chain intermediate from pynA via the formation of a tetramic acid pyranonigrin J. The methyltransferase pynC then coverts pyranonigrin J to pyranonigrin I via N-methylation. The FAD-dependent monooxygenase pynG catalyzes an epoxidation-mediated cyclization to form the dihydro-gamma-pyrone moiety, followed by pynD-catalyzed oxidation of the alcohol to the ketone and enolization to yield the characteristic tetramic acid-fused gamma-pyrone core of pyranonigrin H. Pyranonigrin H is substrate of pynH for dehydration-mediated exo-methylene formation from the serine side chain to produce pyranonigrin E, before the oxidase pynE reduces the exo-methylene of pyranonigrin E into a pendant methyl to form pyranonigrin G. The FAD-linked oxidoreductase pynB performs the reverse reaction and converts pyranonigrin G back to pyranonigrin E. This chain is Hybrid PKS-NRPS synthetase pynA, found in Aspergillus niger (strain ATCC MYA-4892 / CBS 513.88 / FGSC A1513).